Consider the following 119-residue polypeptide: uncharacterized protein (119 aa).

This is an uncharacterized protein from Methanocaldococcus jannaschii (strain ATCC 43067 / DSM 2661 / JAL-1 / JCM 10045 / NBRC 100440) (Methanococcus jannaschii).